Here is a 240-residue protein sequence, read N- to C-terminus: MMPLLDKLREQYGVGPLCSELHIAPSTYYHCQQQRHHPDKRSARAQRDDWLKKQIQRVYDENHKVYGVRKVWRQLLREGIRVARCTVARLMAVMGLAGVLRGKKVRTTISRKAVAAGHRVNRQFVAERPDQLWVADFTYVSTWRGFVYVAFIIDVFAGYIVGWRVSSSMETTFVLDALEQALWTRRPPARSITVIKVLSMYRWPTHSGLRKPDYWHQQEVQATRMTTRWRRASMVFTKRR.

Residues 125-240 (VAERPDQLWV…RASMVFTKRR (116 aa)) form the Integrase catalytic domain.

Its function is as follows. Involved in the transposition of the insertion sequence. The polypeptide is Transposase for insertion sequence element IS3411 (Escherichia coli).